The sequence spans 320 residues: GDSL esterase/lipase At3g43570 (320 aa).

The first 19 residues, 1-19 (MKIQIIWLTLVLIVVEANA), serve as a signal peptide directing secretion. Asparagine 25 carries N-linked (GlcNAc...) asparagine glycosylation. Catalysis depends on serine 37, which acts as the Nucleophile. N-linked (GlcNAc...) asparagine glycosylation is present at asparagine 287. Catalysis depends on residues aspartate 295 and histidine 298.

The protein belongs to the 'GDSL' lipolytic enzyme family.

The protein resides in the secreted. This is GDSL esterase/lipase At3g43570 from Arabidopsis thaliana (Mouse-ear cress).